The following is a 953-amino-acid chain: Ubiquitin carboxyl-terminal hydrolase CYLD (953 aa).

Positions 106–590 are interaction with TRIP; sequence CEERFSLFKN…FEIMIGKKKG (485 aa). CAP-Gly domains are found at residues 153-198 and 253-286; these read LAER…VFVA and DVLP…VQLC. 2 disordered regions span residues 313–349 and 384–410; these read PPKL…RNRS and SLTE…LSSE. The span at 337 to 346 shows a compositional bias: polar residues; that stretch reads TGSTSDPGTR. S384, S415, and S419 each carry phosphoserine. Residues 391–466 form an interaction with TRAF2 region; sequence DFGHASPPLQ…LAVSSGNSHG (76 aa). Residues 467-681 are interaction with IKBKG/NEMO; it reads LEVGSLAEVK…FTSEEKDPEE (215 aa). The CAP-Gly 3 domain maps to 489–532; it reads GQPPGLNEVLAGLELEDECAGCTDGTFRGTRYFTCALKKALFVK. The 359-residue stretch at 589–947 folds into the USP domain; the sequence is KGIQGHYNSC…DAYMCMYQSP (359 aa). The active-site Nucleophile is the C598. The B-box stretch occupies residues 778 to 830; sequence LEDTPRQCRICGGLAMYECRECYDDPDISAGKIKQFCKTCNAQVHLHPKRLNH. Zn(2+)-binding residues include C785, C788, C796, C799, C814, C817, H822, and H830. H868 functions as the Proton acceptor in the catalytic mechanism.

Belongs to the peptidase C19 family. Interacts (via CAP-Gly domain) with IKBKG/NEMO (via proline-rich C-terminal region). Interacts with TRAF2 and TRIP. Interacts with PLK1, DVL1, DVL3, MAVS, TBK1, IKKE and RIGI. Interacts (via CAP-Gly domain) with microtubules. Interacts with HDAC6 and BCL3. Interacts with MAP3K7. Identified in a complex with TRAF6 and SQSTM1. Interacts with OPTN and SQSTM1. Interacts with CEP350. Interacts with RNF31; the interaction is indirect and is mediated via SPATA2. Interacts with SPATA2 (via the PUB domain); the interaction is direct and recruits CYLD to the LUBAC complex, thereby regulating TNF-alpha-induced necroptosis. In terms of processing, phosphorylated on several serine residues by IKKA and/or IKKB in response to immune stimuli. Phosphorylation requires IKBKG. Phosphorylation abolishes TRAF2 deubiquitination, interferes with the activation of Jun kinases, and strongly reduces CD40-dependent gene activation by NF-kappa-B. Ubiquitinated. Polyubiquitinated in hepatocytes treated with palmitic acid. Ubiquitination is mediated by E3 ligase TRIM47 and leads to proteasomal degradation.

It localises to the cytoplasm. The protein localises to the perinuclear region. The protein resides in the cytoskeleton. Its subcellular location is the cell membrane. It is found in the microtubule organizing center. It localises to the centrosome. The protein localises to the spindle. The protein resides in the cilium basal body. It catalyses the reaction Thiol-dependent hydrolysis of ester, thioester, amide, peptide and isopeptide bonds formed by the C-terminal Gly of ubiquitin (a 76-residue protein attached to proteins as an intracellular targeting signal).. Deubiquitinase that specifically cleaves 'Lys-63'- and linear 'Met-1'-linked polyubiquitin chains and is involved in NF-kappa-B activation and TNF-alpha-induced necroptosis. Negatively regulates NF-kappa-B activation by deubiquitinating upstream signaling factors. Contributes to the regulation of cell survival, proliferation and differentiation via its effects on NF-kappa-B activation. Negative regulator of Wnt signaling. Inhibits HDAC6 and thereby promotes acetylation of alpha-tubulin and stabilization of microtubules. Plays a role in the regulation of microtubule dynamics, and thereby contributes to the regulation of cell proliferation, cell polarization, cell migration, and angiogenesis. Required for normal cell cycle progress and normal cytokinesis. Inhibits nuclear translocation of NF-kappa-B. Plays a role in the regulation of inflammation and the innate immune response, via its effects on NF-kappa-B activation. Dispensable for the maturation of intrathymic natural killer cells, but required for the continued survival of immature natural killer cells. Negatively regulates TNFRSF11A signaling and osteoclastogenesis. Involved in the regulation of ciliogenesis, allowing ciliary basal bodies to migrate and dock to the plasma membrane; this process does not depend on NF-kappa-B activation. Ability to remove linear ('Met-1'-linked) polyubiquitin chains regulates innate immunity and TNF-alpha-induced necroptosis: recruited to the LUBAC complex via interaction with SPATA2 and restricts linear polyubiquitin formation on target proteins. Regulates innate immunity by restricting linear polyubiquitin formation on RIPK2 in response to NOD2 stimulation. Involved in TNF-alpha-induced necroptosis by removing linear ('Met-1'-linked) polyubiquitin chains from RIPK1, thereby regulating the kinase activity of RIPK1. Negatively regulates intestinal inflammation by removing 'Lys-63' linked polyubiquitin chain of NLRP6, thereby reducing the interaction between NLRP6 and PYCARD/ASC and formation of the NLRP6 inflammasome. Does not catalyze deubiquitination of heterotypic 'Lys-63'-/'Lys-48'-linked branched ubiquitin chains. Removes 'Lys-63' linked polyubiquitin chain of MAP3K7, which inhibits phosphorylation and blocks downstream activation of the JNK-p38 kinase cascades. Also removes 'Lys-63'-linked polyubiquitin chains of MAP3K1 and MA3P3K3, which inhibit their interaction with MAP2K1 and MAP2K2. The chain is Ubiquitin carboxyl-terminal hydrolase CYLD (CYLD) from Bos taurus (Bovine).